We begin with the raw amino-acid sequence, 1524 residues long: Unhealthy ribosome biogenesis protein 2 homolog (1524 aa).

It is found in the nucleus. Its subcellular location is the nucleolus. In terms of biological role, essential for hematopietic stem cell development through the regulation of p53/TP53 pathway. This Homo sapiens (Human) protein is Unhealthy ribosome biogenesis protein 2 homolog (URB2).